Consider the following 120-residue polypeptide: Ribosome-binding factor A (120 aa).

It belongs to the RbfA family. As to quaternary structure, monomer. Binds 30S ribosomal subunits, but not 50S ribosomal subunits or 70S ribosomes.

Its subcellular location is the cytoplasm. One of several proteins that assist in the late maturation steps of the functional core of the 30S ribosomal subunit. Associates with free 30S ribosomal subunits (but not with 30S subunits that are part of 70S ribosomes or polysomes). Required for efficient processing of 16S rRNA. May interact with the 5'-terminal helix region of 16S rRNA. This is Ribosome-binding factor A from Rickettsia peacockii (strain Rustic).